A 495-amino-acid chain; its full sequence is GTPase Der (495 aa).

EngA-type G domains follow at residues 3–166 and 208–381; these read PVIA…MDAE and IKLA…DCST. GTP contacts are provided by residues 9-16, 56-60, 118-121, 214-221, 261-265, and 326-329; these read GRPNVGKS, DTGGI, NKTD, DTAGV, and NKWD. The region spanning 382–466 is the KH-like domain; sequence KRVGTSLLTR…PIRIQFKEGE (85 aa).

The protein belongs to the TRAFAC class TrmE-Era-EngA-EngB-Septin-like GTPase superfamily. EngA (Der) GTPase family. In terms of assembly, associates with the 50S ribosomal subunit.

In terms of biological role, GTPase that plays an essential role in the late steps of ribosome biogenesis. In Yersinia pseudotuberculosis serotype IB (strain PB1/+), this protein is GTPase Der.